Consider the following 620-residue polypeptide: Probable potassium transport system protein Kup 1 (620 aa).

The next 12 helical transmembrane spans lie at 10–30 (LLIS…LYAL), 50–70 (VLSL…VIVI), 102–122 (MLLG…TPAI), 138–158 (LTPY…MIQK), 168–188 (FGPV…VNIV), 211–231 (MMSF…EALY), 246–266 (WFAL…ALLL), 284–304 (MVVP…QAVI), 336–356 (IYIP…VIGF), 368–388 (IAVT…MALM), 393–413 (WIAV…FFFA), and 415–435 (IIKV…SFTV).

It belongs to the HAK/KUP transporter (TC 2.A.72) family.

It localises to the cell inner membrane. It catalyses the reaction K(+)(in) + H(+)(in) = K(+)(out) + H(+)(out). Functionally, transport of potassium into the cell. Likely operates as a K(+):H(+) symporter. The sequence is that of Probable potassium transport system protein Kup 1 from Rhodopseudomonas palustris (strain BisB18).